The following is a 320-amino-acid chain: Aminoacyl tRNA synthase complex-interacting multifunctional protein 2 (320 aa).

Residues 31 to 51 are disordered; that stretch reads HSKTTSPATDAGHVQEPSEPS. Position 36 is a phosphoserine (Ser-36). The tract at residues 82–162 is interaction with PRKN; the sequence is TPDADLDVTN…HTHSSVKNVP (81 aa). The segment at 162-225 is interaction with TP53; sequence PENLLKCFGE…FLFSLFGQKH (64 aa). In terms of domain architecture, GST C-terminal spans 220–317; it reads LFGQKHNAVH…NLAPFSTALQ (98 aa).

As to quaternary structure, part of the multisynthetase complex (MSC), a multisubunit complex that groups tRNA ligases for Arg (RARS1), Asp (DARS1), Gln (QARS1), Ile (IARS1), Leu (LARS1), Lys (KARS1), Met (MARS1) the bifunctional ligase for Glu and Pro (EPRS1) and the auxiliary subunits AIMP1/p43, AIMP2/p38 and EEF1E1/p18. Interacts (via N-terminus) with KARS1. Interacts with EPRS1. Forms a linear complex that contains MARS1, EEF1E1, EPRS1 and AIMP2 that is at the core of the multisubunit complex. Binds FUBP1 (via C-terminus). Interacts in both its unphosphorylated and phosphorylated forms with p53/TP53 (via N-terminus) in the nucleus following UV irradiation. Interacts (via N-terminus) with PRKN/parkin (via first RING-type domain). Interacts with TARS3. Phosphorylated on serine residues in response to UV irradiation. Post-translationally, ubiquitinated by PRKN, leading to its degradation by the proteasome.

Its subcellular location is the cytoplasm. It is found in the cytosol. The protein resides in the nucleus. Functionally, required for assembly and stability of the aminoacyl-tRNA synthase complex. Mediates ubiquitination and degradation of FUBP1, a transcriptional activator of MYC, leading to MYC down-regulation which is required for aveolar type II cell differentiation. Blocks MDM2-mediated ubiquitination and degradation of p53/TP53. Functions as a proapoptotic factor. The polypeptide is Aminoacyl tRNA synthase complex-interacting multifunctional protein 2 (Aimp2) (Rattus norvegicus (Rat)).